The sequence spans 494 residues: MGTTKVTTPLIFAISIATIGSFQFGYNTGVINAPEAIIKDFLNYTLEERSETPPSSVLLTSLWSLSVAIFSVGGMIGSFSVGLFVNRFGRRNSMLIVNLLAIAGGCLMGFCKIAESVEMLILGRLIIGLFCGLCTGFVPMYIGEISPTALRGAFGTLNQLGIVIGILVAQIFGLKVILGTEDLWPLLLGFTILPAIIQCAALPFCPESPRFLLINRKEEEKAKEILQRLWGTEDVAQDIQEMKDESMRMSQEKQVTVLELFRAPNYRQPIIISIMLQLSQQLSGINAVFYYSTGIFKDAGVQEPVYATIGAGVVNTIFTVVSVFLVERAGRRTLHLIGLGGMAFCSILMTISLLLKDNYSWMSFICIGAILVFVAFFEIGPGPIPWFIVAELFGQGPRPAAMAVAGCSNWTSNFLVGLLFPSATFYLGAYVFIVFTVFLVIFWVFTFFKVPETRGRTFEEITRAFEGQVQTGTRGEKGPIMEMNSIQPTKDTNA.

Residues 1-10 lie on the Cytoplasmic side of the membrane; it reads MGTTKVTTPL. Residues 11-32 traverse the membrane as a helical segment; that stretch reads IFAISIATIGSFQFGYNTGVIN. The Extracellular portion of the chain corresponds to 33–64; the sequence is APEAIIKDFLNYTLEERSETPPSSVLLTSLWS. N43 is a glycosylation site (N-linked (GlcNAc...) asparagine). Residues 65 to 85 form a helical membrane-spanning segment; it reads LSVAIFSVGGMIGSFSVGLFV. Over 86–90 the chain is Cytoplasmic; sequence NRFGR. Residues 91-111 traverse the membrane as a helical segment; the sequence is RNSMLIVNLLAIAGGCLMGFC. The Extracellular segment spans residues 112–118; it reads KIAESVE. The chain crosses the membrane as a helical span at residues 119–142; that stretch reads MLILGRLIIGLFCGLCTGFVPMYI. Residues 143 to 153 lie on the Cytoplasmic side of the membrane; it reads GEISPTALRGA. The chain crosses the membrane as a helical span at residues 154-174; sequence FGTLNQLGIVIGILVAQIFGL. Q159 contributes to the D-glucose binding site. Topologically, residues 175-183 are extracellular; that stretch reads KVILGTEDL. The helical transmembrane segment at 184 to 204 threads the bilayer; sequence WPLLLGFTILPAIIQCAALPF. Residues 205–269 are Cytoplasmic-facing; sequence CPESPRFLLI…LFRAPNYRQP (65 aa). The residue at position 232 (T232) is a Phosphothreonine. The chain crosses the membrane as a helical span at residues 270–290; that stretch reads IIISIMLQLSQQLSGINAVFY. Residues 277-279 are important for selectivity against fructose; that stretch reads QLS. D-glucose-binding positions include 280-281 and N286; that span reads QQ. Residues 291 to 304 lie on the Extracellular side of the membrane; sequence YSTGIFKDAGVQEP. A helical membrane pass occupies residues 305–325; sequence VYATIGAGVVNTIFTVVSVFL. N315 lines the D-glucose pocket. At 326–331 the chain is on the cytoplasmic side; that stretch reads VERAGR. The chain crosses the membrane as a helical span at residues 332-352; the sequence is RTLHLIGLGGMAFCSILMTIS. Residues 353–363 lie on the Extracellular side of the membrane; the sequence is LLLKDNYSWMS. Residues 364 to 389 form a helical membrane-spanning segment; it reads FICIGAILVFVAFFEIGPGPIPWFIV. E378 and W386 together coordinate D-glucose. Over 390–399 the chain is Cytoplasmic; the sequence is AELFGQGPRP. Residues 400–420 traverse the membrane as a helical segment; sequence AAMAVAGCSNWTSNFLVGLLF. Topologically, residues 421-429 are extracellular; that stretch reads PSATFYLGA. Residues 430-450 traverse the membrane as a helical segment; it reads YVFIVFTVFLVIFWVFTFFKV. The Cytoplasmic segment spans residues 451-494; it reads PETRGRTFEEITRAFEGQVQTGTRGEKGPIMEMNSIQPTKDTNA. The interval 473-494 is disordered; the sequence is TRGEKGPIMEMNSIQPTKDTNA. A compositionally biased stretch (polar residues) spans 484–494; sequence NSIQPTKDTNA. S485 is subject to Phosphoserine. The residue at position 492 (T492) is a Phosphothreonine.

Belongs to the major facilitator superfamily. Sugar transporter (TC 2.A.1.1) family. Glucose transporter subfamily. As to quaternary structure, interacts with SMIM43; the interaction may promote SLC2A3-mediated glucose transport to meet the energy needs of mesendoderm differentiation. Detected in placenta.

Its subcellular location is the cell membrane. The protein localises to the perikaryon. It is found in the cell projection. The enzyme catalyses D-glucose(out) = D-glucose(in). The catalysed reaction is D-galactose(in) = D-galactose(out). Its activity is regulated as follows. Deoxyglucose transport is inhibited by D-glucose, D-galactose and maltose. Galactose transport is inhibited by D-glucose and maltose. Facilitative glucose transporter. Can also mediate the uptake of various other monosaccharides across the cell membrane. Mediates the uptake of glucose, 2-deoxyglucose, galactose, mannose, xylose and fucose, and probably also dehydroascorbate. Does not mediate fructose transport. Required for mesendoderm differentiation. This Ovis aries (Sheep) protein is Solute carrier family 2, facilitated glucose transporter member 3.